A 463-amino-acid chain; its full sequence is Aromatic amino acid transport protein AroP (463 aa).

Transmembrane regions (helical) follow at residues 18-38 (TMMGLGSAIGAGLFLGTGVGI), 40-60 (AAGPAVLLAYIIAGAIVVLVM), 84-104 (FGHWAGFSLGWLYWFMLIMVM), 117-137 (AWFGVEPWIPSLVCVVFFAVV), 157-177 (VAVIIAFLIIGIALIFGWLPG), 200-220 (VAAGLLAVAFAFGGIEIVTIA), 237-257 (AVIWRISVFYLGSVLVITFLM), 276-296 (ILAMANIPGTVGFMEAIIVLA), 337-357 (AVLLSMFFAFVSVGLQYWNPA), 358-378 (GLLDFLLNAVGGCLIVVWAMI), 402-422 (AHPWLGILTLVLLAGLVALML), and 431-451 (VYSVAIVYGFLVLLSFVTVNS).

Belongs to the amino acid-polyamine-organocation (APC) superfamily. Amino acid transporter (AAT) (TC 2.A.3.1) family.

The protein resides in the cell membrane. The enzyme catalyses L-phenylalanine(in) + H(+)(in) = L-phenylalanine(out) + H(+)(out). It carries out the reaction L-tryptophan(in) + H(+)(in) = L-tryptophan(out) + H(+)(out). The catalysed reaction is L-tyrosine(in) + H(+)(in) = L-tyrosine(out) + H(+)(out). Permease that is involved in the active transport across the cytoplasmic membrane of all three aromatic amino acids, phenylalanine, tyrosine and tryptophan. The sequence is that of Aromatic amino acid transport protein AroP from Corynebacterium glutamicum (strain ATCC 13032 / DSM 20300 / JCM 1318 / BCRC 11384 / CCUG 27702 / LMG 3730 / NBRC 12168 / NCIMB 10025 / NRRL B-2784 / 534).